The following is a 367-amino-acid chain: Probable protein phosphatase 2C 57 (367 aa).

Residues 1 to 29 (MEEHRLGGGGGGGGGGGRPPIPGAAGRKL) form a disordered region. Residues 7–18 (GGGGGGGGGGGR) show a composition bias toward gly residues. The PPM-type phosphatase domain occupies 67 to 331 (RSGGWADIGS…DNLSVVVICF (265 aa)). The Mn(2+) site is built by Asp111, Gly112, Asp279, and Asp322.

The protein belongs to the PP2C family. It depends on Mg(2+) as a cofactor. Mn(2+) is required as a cofactor.

It catalyses the reaction O-phospho-L-seryl-[protein] + H2O = L-seryl-[protein] + phosphate. It carries out the reaction O-phospho-L-threonyl-[protein] + H2O = L-threonyl-[protein] + phosphate. This chain is Probable protein phosphatase 2C 57, found in Oryza sativa subsp. japonica (Rice).